A 307-amino-acid polypeptide reads, in one-letter code: Ornithine carbamoyltransferase (307 aa).

Carbamoyl phosphate contacts are provided by residues 50 to 53, Gln77, Arg101, and 128 to 131; these read STRT and HPCQ. L-ornithine contacts are provided by residues Asn160, Asp224, and 228–229; that span reads SM. Residues 264–265 and Arg292 each bind carbamoyl phosphate; that span reads CL.

Belongs to the aspartate/ornithine carbamoyltransferase superfamily. OTCase family.

The protein localises to the cytoplasm. The catalysed reaction is carbamoyl phosphate + L-ornithine = L-citrulline + phosphate + H(+). It functions in the pathway amino-acid biosynthesis; L-arginine biosynthesis; L-arginine from L-ornithine and carbamoyl phosphate: step 1/3. Its function is as follows. Reversibly catalyzes the transfer of the carbamoyl group from carbamoyl phosphate (CP) to the N(epsilon) atom of ornithine (ORN) to produce L-citrulline. The chain is Ornithine carbamoyltransferase from Clavibacter michiganensis subsp. michiganensis (strain NCPPB 382).